The following is a 143-amino-acid chain: uncharacterized protein (143 aa).

The N-terminal 38 residues, 1 to 38 (MKYWKYLSQLTIRRPLTYNNALLYRNRFPSILTWKRSA), are a transit peptide targeting the mitochondrion.

The protein localises to the mitochondrion. This is an uncharacterized protein from Schizosaccharomyces pombe (strain 972 / ATCC 24843) (Fission yeast).